A 136-amino-acid chain; its full sequence is NADH-quinone oxidoreductase subunit A (136 aa).

The next 3 membrane-spanning stretches (helical) occupy residues 20–40 (LAVYAVLVAAFVAVQLFVAWW), 70–90 (VPFYLVAIFFLIFDMEGAYIL), and 99–119 (LGWAGWLQMSFFIGLLLVGLV).

The protein belongs to the complex I subunit 3 family. In terms of assembly, NDH-1 is composed of 14 different subunits. Subunits NuoA, H, J, K, L, M, N constitute the membrane sector of the complex.

The protein resides in the cell inner membrane. The catalysed reaction is a quinone + NADH + 5 H(+)(in) = a quinol + NAD(+) + 4 H(+)(out). Its function is as follows. NDH-1 shuttles electrons from NADH, via FMN and iron-sulfur (Fe-S) centers, to quinones in the respiratory chain. The immediate electron acceptor for the enzyme in this species is believed to be ubiquinone. Couples the redox reaction to proton translocation (for every two electrons transferred, four hydrogen ions are translocated across the cytoplasmic membrane), and thus conserves the redox energy in a proton gradient. The polypeptide is NADH-quinone oxidoreductase subunit A (Syntrophobacter fumaroxidans (strain DSM 10017 / MPOB)).